Reading from the N-terminus, the 297-residue chain is Thiosulfate sulfurtransferase (297 aa).

Position 14 is an N6-acetyllysine; alternate (K14). N6-succinyllysine; alternate is present on K14. Positions L25–S143 constitute a Rhodanese 1 domain. An O-linked (GlcNAc) serine glycan is attached at S35. At S38 the chain carries Phosphoserine. An N6-acetyllysine; alternate modification is found at K136. Residue K136 is modified to N6-succinyllysine; alternate. The segment at E144–R159 is hinge. K163 carries the N6-acetyllysine modification. Residues Q173–R288 enclose the Rhodanese 2 domain. At K175 the chain carries N6-acetyllysine; alternate. At K175 the chain carries N6-succinyllysine; alternate. Residue R187 coordinates substrate. K224 is modified (N6-acetyllysine; alternate). Position 224 is an N6-succinyllysine; alternate (K224). K236 is subject to N6-acetyllysine. Residue K237 is modified to N6-acetyllysine; alternate. K237 carries the post-translational modification N6-succinyllysine; alternate. C248 (cysteine persulfide intermediate) is an active-site residue. Residue K250 coordinates substrate.

In terms of assembly, monomer.

It localises to the mitochondrion matrix. The enzyme catalyses thiosulfate + hydrogen cyanide = thiocyanate + sulfite + 2 H(+). In terms of biological role, together with MRPL18, acts as a mitochondrial import factor for the cytosolic 5S rRNA. Only the nascent unfolded cytoplasmic form is able to bind to the 5S rRNA. Formation of iron-sulfur complexes and cyanide detoxification. Binds molecular oxygen and sulfur. The polypeptide is Thiosulfate sulfurtransferase (TST) (Cricetulus griseus (Chinese hamster)).